The chain runs to 305 residues: Mitogen-activated protein kinase kinase 10 (305 aa).

Residue S34 is modified to Phosphoserine. The Protein kinase domain occupies 48-302 (LEKLSVLGQG…VEELLRHSFV (255 aa)). ATP-binding positions include 54–62 (LGQGSGGTV) and K77. D165 (proton acceptor) is an active-site residue. T200 is modified (phosphothreonine).

It belongs to the protein kinase superfamily. STE Ser/Thr protein kinase family. MAP kinase kinase subfamily. Interacts with P.syringae type III effector HopF2.

It carries out the reaction L-seryl-[protein] + ATP = O-phospho-L-seryl-[protein] + ADP + H(+). It catalyses the reaction L-threonyl-[protein] + ATP = O-phospho-L-threonyl-[protein] + ADP + H(+). The enzyme catalyses L-tyrosyl-[protein] + ATP = O-phospho-L-tyrosyl-[protein] + ADP + H(+). This is Mitogen-activated protein kinase kinase 10 (MKK10) from Arabidopsis thaliana (Mouse-ear cress).